Reading from the N-terminus, the 409-residue chain is DNA replication and repair protein RecF (409 aa).

Residue 30 to 37 coordinates ATP; that stretch reads GSNGHGKT.

Belongs to the RecF family.

The protein resides in the cytoplasm. The RecF protein is involved in DNA metabolism; it is required for DNA replication and normal SOS inducibility. RecF binds preferentially to single-stranded, linear DNA. It also seems to bind ATP. The sequence is that of DNA replication and repair protein RecF from Rhodococcus erythropolis (strain PR4 / NBRC 100887).